The sequence spans 288 residues: ATP synthase gamma chain 1 (288 aa).

The protein belongs to the ATPase gamma chain family. As to quaternary structure, F-type ATPases have 2 components, CF(1) - the catalytic core - and CF(0) - the membrane proton channel. CF(1) has five subunits: alpha(3), beta(3), gamma(1), delta(1), epsilon(1). CF(0) has three main subunits: a, b and c.

It localises to the cell inner membrane. Produces ATP from ADP in the presence of a proton gradient across the membrane. The gamma chain is believed to be important in regulating ATPase activity and the flow of protons through the CF(0) complex. The chain is ATP synthase gamma chain 1 from Photobacterium profundum (strain SS9).